The following is a 257-amino-acid chain: MDVRGIFGVKVGMSQIFTEQNECLPITIVYCEANQVAGIKTIAKDNYNATLLSFQTVDEKQLNKPKQGFFSKLKLEPHKYLREIRKMQGFELGKKITPQELFKIGEYVDVTSLTKGRGFTGAIKRWNFKIGPLGHGAGYPHRFQGSVQAGRGGSSAQRVFKGKKMSGHYGHEQVTIQNLFIVGFDEINKLVLVSGAIAGPEGGIVLIKTAKKKTGKIKDIKLAVQTVKAPQLKAPKKQKTKVETNQVNPKIEEEKTK.

The segment at 232 to 257 is disordered; the sequence is LKAPKKQKTKVETNQVNPKIEEEKTK.

This sequence belongs to the universal ribosomal protein uL3 family. Part of the 50S ribosomal subunit. Forms a cluster with proteins L14 and L19.

Functionally, one of the primary rRNA binding proteins, it binds directly near the 3'-end of the 23S rRNA, where it nucleates assembly of the 50S subunit. The chain is Large ribosomal subunit protein uL3 from Mycoplasma genitalium (strain ATCC 33530 / DSM 19775 / NCTC 10195 / G37) (Mycoplasmoides genitalium).